We begin with the raw amino-acid sequence, 716 residues long: DNA ligase (716 aa).

Residues 47 to 51, 96 to 97, and Glu130 contribute to the NAD(+) site; these read DATYD and SL. Lys132 acts as the N6-AMP-lysine intermediate in catalysis. Arg153, Glu190, Lys306, and Lys330 together coordinate NAD(+). Zn(2+) contacts are provided by Cys435, Cys438, Cys453, and Cys459. The 79-residue stretch at 638–716 folds into the BRCT domain; sequence RSDSAVAGKT…EDEWLKLIEG (79 aa).

It belongs to the NAD-dependent DNA ligase family. LigA subfamily. The cofactor is Mg(2+). Mn(2+) serves as cofactor.

It carries out the reaction NAD(+) + (deoxyribonucleotide)n-3'-hydroxyl + 5'-phospho-(deoxyribonucleotide)m = (deoxyribonucleotide)n+m + AMP + beta-nicotinamide D-nucleotide.. In terms of biological role, DNA ligase that catalyzes the formation of phosphodiester linkages between 5'-phosphoryl and 3'-hydroxyl groups in double-stranded DNA using NAD as a coenzyme and as the energy source for the reaction. It is essential for DNA replication and repair of damaged DNA. This chain is DNA ligase, found in Nitrobacter winogradskyi (strain ATCC 25391 / DSM 10237 / CIP 104748 / NCIMB 11846 / Nb-255).